A 379-amino-acid polypeptide reads, in one-letter code: Copper-containing nitrite reductase (379 aa).

Positions M1–A32 form a signal peptide, tat-type signal. Plastocyanin-like domains lie at E33 to V214 and Y215 to G379. Residues H134, H139, H174, C175, H184, M189, and H345 each coordinate Cu cation.

It belongs to the multicopper oxidase family. In terms of assembly, homotrimer. It depends on Cu(2+) as a cofactor. The cofactor is Cu(+). FAD serves as cofactor. Post-translationally, predicted to be exported by the Tat system. The position of the signal peptide cleavage has not been experimentally proven.

The protein resides in the periplasm. The enzyme catalyses nitric oxide + Fe(III)-[cytochrome c] + H2O = Fe(II)-[cytochrome c] + nitrite + 2 H(+). It functions in the pathway nitrogen metabolism; nitrate reduction (denitrification); dinitrogen from nitrate: step 2/4. In Neorhizobium galegae (Rhizobium galegae), this protein is Copper-containing nitrite reductase (nirU).